The chain runs to 343 residues: GTPase Obg (343 aa).

In terms of domain architecture, Obg spans 1–159 (MKFLDQAKIY…RWVWLRLKLI (159 aa)). One can recognise an OBG-type G domain in the interval 160-328 (ADAGLVGLPN…LLRQVMTYVA (169 aa)). GTP contacts are provided by residues 166 to 173 (GLPNAGKS), 191 to 195 (FTTLH), 213 to 216 (DIPG), 280 to 283 (NKCD), and 309 to 311 (SGV). Positions 173 and 193 each coordinate Mg(2+).

The protein belongs to the TRAFAC class OBG-HflX-like GTPase superfamily. OBG GTPase family. As to quaternary structure, monomer. Mg(2+) is required as a cofactor.

It is found in the cytoplasm. An essential GTPase which binds GTP, GDP and possibly (p)ppGpp with moderate affinity, with high nucleotide exchange rates and a fairly low GTP hydrolysis rate. Plays a role in control of the cell cycle, stress response, ribosome biogenesis and in those bacteria that undergo differentiation, in morphogenesis control. The chain is GTPase Obg from Granulibacter bethesdensis (strain ATCC BAA-1260 / CGDNIH1).